A 495-amino-acid chain; its full sequence is Glycerol kinase (495 aa).

Thr-11 is a binding site for ADP. 3 residues coordinate ATP: Thr-11, Thr-12, and Ser-13. Sn-glycerol 3-phosphate is bound at residue Thr-11. Residue Arg-15 participates in ADP binding. Sn-glycerol 3-phosphate is bound by residues Arg-81, Glu-82, Tyr-133, and Asp-242. Glycerol is bound by residues Arg-81, Glu-82, Tyr-133, Asp-242, and Gln-243. Positions 264 and 307 each coordinate ADP. Positions 264, 307, 311, and 408 each coordinate ATP. Positions 408 and 412 each coordinate ADP.

Belongs to the FGGY kinase family.

The catalysed reaction is glycerol + ATP = sn-glycerol 3-phosphate + ADP + H(+). Its pathway is polyol metabolism; glycerol degradation via glycerol kinase pathway; sn-glycerol 3-phosphate from glycerol: step 1/1. With respect to regulation, inhibited by fructose 1,6-bisphosphate (FBP). Its function is as follows. Key enzyme in the regulation of glycerol uptake and metabolism. Catalyzes the phosphorylation of glycerol to yield sn-glycerol 3-phosphate. This chain is Glycerol kinase, found in Rhodospirillum rubrum (strain ATCC 11170 / ATH 1.1.1 / DSM 467 / LMG 4362 / NCIMB 8255 / S1).